A 240-amino-acid chain; its full sequence is Nudix hydrolase 3 (240 aa).

The Nudix hydrolase domain maps to 50–190; the sequence is NSAMSVLIPL…RMKYTLPSFD (141 aa). Positions 89 to 110 match the Nudix box motif; that stretch reads GRMDPGETTTETALRETFEEIG. E104 and E108 together coordinate Mg(2+).

The protein belongs to the Nudix hydrolase family. PCD1 subfamily. It depends on Mn(2+) as a cofactor. The cofactor is Mg(2+).

Probably mediates the hydrolysis of some nucleoside diphosphate derivatives. The polypeptide is Nudix hydrolase 3 (ndx-3) (Caenorhabditis elegans).